The chain runs to 478 residues: Aspartyl/glutamyl-tRNA(Asn/Gln) amidotransferase subunit B 2 (478 aa).

This sequence belongs to the GatB/GatE family. GatB subfamily. Heterotrimer of A, B and C subunits.

The enzyme catalyses L-glutamyl-tRNA(Gln) + L-glutamine + ATP + H2O = L-glutaminyl-tRNA(Gln) + L-glutamate + ADP + phosphate + H(+). It carries out the reaction L-aspartyl-tRNA(Asn) + L-glutamine + ATP + H2O = L-asparaginyl-tRNA(Asn) + L-glutamate + ADP + phosphate + 2 H(+). Functionally, allows the formation of correctly charged Asn-tRNA(Asn) or Gln-tRNA(Gln) through the transamidation of misacylated Asp-tRNA(Asn) or Glu-tRNA(Gln) in organisms which lack either or both of asparaginyl-tRNA or glutaminyl-tRNA synthetases. The reaction takes place in the presence of glutamine and ATP through an activated phospho-Asp-tRNA(Asn) or phospho-Glu-tRNA(Gln). This chain is Aspartyl/glutamyl-tRNA(Asn/Gln) amidotransferase subunit B 2 (gatB2), found in Clostridium acetobutylicum (strain ATCC 824 / DSM 792 / JCM 1419 / IAM 19013 / LMG 5710 / NBRC 13948 / NRRL B-527 / VKM B-1787 / 2291 / W).